The chain runs to 550 residues: Membrane protein of ER body 2 (550 aa).

Residues 46 to 199 (EFRSKAAATA…SSDSEEKSNL (154 aa)) are disordered. Low complexity-rich tracts occupy residues 80-105 (SVSE…SETG) and 112-121 (TGSNEENGNN). Residues 122-132 (WLESSSTNLPN) are compositionally biased toward polar residues. Residues 134–165 (ENKRQRNGEDCEIEEEEENNERSLSDSEEKSN) are a coiled coil. Residues 143-152 (DCEIEEEEEN) show a composition bias toward acidic residues. 2 stretches are compositionally biased toward basic and acidic residues: residues 153-166 (NERS…KSNL) and 185-198 (KNER…EKSN). A run of 4 helical transmembrane segments spans residues 374-394 (STMN…IVLA), 425-445 (ILVA…VYAF), 458-478 (ISVF…KVYV), and 500-520 (SIVV…GEYI). Residues 393 to 418 (LAQNFQDLRNSSDQEKDRYEELLGRR) are a coiled coil.

The protein belongs to the CCC1 family. In terms of assembly, interacts directly or indirectly with NAI2.

The protein resides in the endoplasmic reticulum membrane. May sequester excess cytosolic iron and manganese into endoplasmic reticulum to reduce metal ion toxicity. Not essential for the accumulation of ER body components, including PYK10. The sequence is that of Membrane protein of ER body 2 (MEB2) from Arabidopsis thaliana (Mouse-ear cress).